Here is a 301-residue protein sequence, read N- to C-terminus: Phosphatidylserine decarboxylase proenzyme (301 aa).

Catalysis depends on charge relay system; for autoendoproteolytic cleavage activity residues Asp-115, His-171, and Ser-258. Ser-258 acts as the Schiff-base intermediate with substrate; via pyruvic acid; for decarboxylase activity in catalysis. Ser-258 is modified (pyruvic acid (Ser); by autocatalysis).

It belongs to the phosphatidylserine decarboxylase family. PSD-B subfamily. Prokaryotic type II sub-subfamily. Heterodimer of a large membrane-associated beta subunit and a small pyruvoyl-containing alpha subunit. The cofactor is pyruvate. Post-translationally, is synthesized initially as an inactive proenzyme. Formation of the active enzyme involves a self-maturation process in which the active site pyruvoyl group is generated from an internal serine residue via an autocatalytic post-translational modification. Two non-identical subunits are generated from the proenzyme in this reaction, and the pyruvate is formed at the N-terminus of the alpha chain, which is derived from the carboxyl end of the proenzyme. The autoendoproteolytic cleavage occurs by a canonical serine protease mechanism, in which the side chain hydroxyl group of the serine supplies its oxygen atom to form the C-terminus of the beta chain, while the remainder of the serine residue undergoes an oxidative deamination to produce ammonia and the pyruvoyl prosthetic group on the alpha chain. During this reaction, the Ser that is part of the protease active site of the proenzyme becomes the pyruvoyl prosthetic group, which constitutes an essential element of the active site of the mature decarboxylase.

It localises to the cell membrane. The catalysed reaction is a 1,2-diacyl-sn-glycero-3-phospho-L-serine + H(+) = a 1,2-diacyl-sn-glycero-3-phosphoethanolamine + CO2. It participates in phospholipid metabolism; phosphatidylethanolamine biosynthesis; phosphatidylethanolamine from CDP-diacylglycerol: step 2/2. Functionally, catalyzes the formation of phosphatidylethanolamine (PtdEtn) from phosphatidylserine (PtdSer). The chain is Phosphatidylserine decarboxylase proenzyme from Chlamydia pneumoniae (Chlamydophila pneumoniae).